Here is a 137-residue protein sequence, read N- to C-terminus: Large ribosomal subunit protein uL16c (137 aa).

This sequence belongs to the universal ribosomal protein uL16 family. Part of the 50S ribosomal subunit.

The protein resides in the plastid. It is found in the chloroplast. The polypeptide is Large ribosomal subunit protein uL16c (Rhodomonas salina (Cryptomonas salina)).